Here is a 282-residue protein sequence, read N- to C-terminus: Putative phosphatase MPN_383 (282 aa).

The Nucleophile role is filled by aspartate 11. Mg(2+) is bound at residue aspartate 11. Phosphate is bound at residue leucine 12. Aspartate 13 contributes to the Mg(2+) binding site. Residues 45–46 and lysine 207 each bind phosphate; that span reads TG. Aspartate 230 contacts Mg(2+). Asparagine 233 is a binding site for phosphate.

Belongs to the HAD-like hydrolase superfamily. Cof family. Requires Mg(2+) as cofactor.

This Mycoplasma pneumoniae (strain ATCC 29342 / M129 / Subtype 1) (Mycoplasmoides pneumoniae) protein is Putative phosphatase MPN_383.